We begin with the raw amino-acid sequence, 292 residues long: Ribosomal RNA small subunit methyltransferase I (292 aa).

Belongs to the methyltransferase superfamily. RsmI family.

It is found in the cytoplasm. It catalyses the reaction cytidine(1402) in 16S rRNA + S-adenosyl-L-methionine = 2'-O-methylcytidine(1402) in 16S rRNA + S-adenosyl-L-homocysteine + H(+). Functionally, catalyzes the 2'-O-methylation of the ribose of cytidine 1402 (C1402) in 16S rRNA. The chain is Ribosomal RNA small subunit methyltransferase I from Bacillus subtilis (strain 168).